The sequence spans 194 residues: Ribonuclease HII (194 aa).

Residues 16 to 194 enclose the RNase H type-2 domain; sequence CIVAGIDEAG…PYHRRSFRCC (179 aa). Residues Asp-22, Glu-23, and Asp-113 each coordinate a divalent metal cation.

Belongs to the RNase HII family. It depends on Mn(2+) as a cofactor. Requires Mg(2+) as cofactor.

It is found in the cytoplasm. The catalysed reaction is Endonucleolytic cleavage to 5'-phosphomonoester.. Functionally, endonuclease that specifically degrades the RNA of RNA-DNA hybrids. The polypeptide is Ribonuclease HII (Rickettsia massiliae (strain Mtu5)).